The following is a 413-amino-acid chain: Putative competence-damage inducible protein (413 aa).

Belongs to the CinA family.

This chain is Putative competence-damage inducible protein, found in Thermoanaerobacter sp. (strain X514).